We begin with the raw amino-acid sequence, 124 residues long: NADH dehydrogenase [ubiquinone] iron-sulfur protein 6, mitochondrial (124 aa).

A mitochondrion-targeting transit peptide spans 1 to 28; sequence MAAAMTFCRLLNRCGEAARSLPLGARCF. At Lys98 the chain carries N6-acetyllysine.

This sequence belongs to the complex I NDUFS6 subunit family. In terms of assembly, mammalian complex I is composed of 45 different subunits. This is a component of the iron-sulfur (IP) fragment of the enzyme.

It localises to the mitochondrion inner membrane. Accessory subunit of the mitochondrial membrane respiratory chain NADH dehydrogenase (Complex I), that is believed not to be involved in catalysis. Complex I functions in the transfer of electrons from NADH to the respiratory chain. The immediate electron acceptor for the enzyme is believed to be ubiquinone. This chain is NADH dehydrogenase [ubiquinone] iron-sulfur protein 6, mitochondrial (NDUFS6), found in Gorilla gorilla gorilla (Western lowland gorilla).